Consider the following 404-residue polypeptide: Cysteine desulfurase IscS (404 aa).

Pyridoxal 5'-phosphate-binding positions include 75–76, asparagine 155, glutamine 183, and 203–205; these read AT and SAH. Position 206 is an N6-(pyridoxal phosphate)lysine (lysine 206). Position 243 (threonine 243) interacts with pyridoxal 5'-phosphate. Catalysis depends on cysteine 328, which acts as the Cysteine persulfide intermediate. Residue cysteine 328 coordinates [2Fe-2S] cluster.

This sequence belongs to the class-V pyridoxal-phosphate-dependent aminotransferase family. NifS/IscS subfamily. Homodimer. Forms a heterotetramer with IscU, interacts with other sulfur acceptors. The cofactor is pyridoxal 5'-phosphate.

Its subcellular location is the cytoplasm. It carries out the reaction (sulfur carrier)-H + L-cysteine = (sulfur carrier)-SH + L-alanine. Its pathway is cofactor biosynthesis; iron-sulfur cluster biosynthesis. Its function is as follows. Master enzyme that delivers sulfur to a number of partners involved in Fe-S cluster assembly, tRNA modification or cofactor biosynthesis. Catalyzes the removal of elemental sulfur atoms from cysteine to produce alanine. Functions as a sulfur delivery protein for Fe-S cluster synthesis onto IscU, an Fe-S scaffold assembly protein, as well as other S acceptor proteins. The sequence is that of Cysteine desulfurase IscS from Buchnera aphidicola subsp. Acyrthosiphon pisum (strain 5A).